Reading from the N-terminus, the 345-residue chain is Beta-2-glycoprotein 1 (345 aa).

Positions 1–19 (MPPPALVLLLGFLCHVAIA) are cleaved as a signal peptide. 4 Sushi domains span residues 21-81 (RTCP…KCMP), 82-139 (RVCP…VCAP), 140-202 (ITCP…ECRE), and 203-262 (VRCP…SCKA). Disulfide bonds link Cys-23-Cys-66, Cys-51-Cys-79, Cys-84-Cys-124, Cys-110-Cys-137, Cys-142-Cys-188, Cys-174-Cys-200, Cys-205-Cys-248, Cys-234-Cys-260, Cys-264-Cys-315, Cys-300-Cys-325, and Cys-307-Cys-345. A glycan (O-linked (GalNAc...) threonine) is linked at Thr-33. A glycan (N-linked (GlcNAc...) asparagine) is linked at Asn-92. N-linked (GlcNAc...) asparagine glycans are attached at residues Asn-162, Asn-183, and Asn-193. Asn-253 carries an N-linked (GlcNAc...) asparagine glycan. A sushi-like region spans residues 263-345 (SCKLSIKRAT…KTDASDVKPC (83 aa)).

As to expression, expressed by the liver and secreted in plasma.

The protein resides in the secreted. Functionally, binds to various kinds of negatively charged substances such as heparin, phospholipids, and dextran sulfate. May prevent activation of the intrinsic blood coagulation cascade by binding to phospholipids on the surface of damaged cells. This chain is Beta-2-glycoprotein 1 (APOH), found in Bos taurus (Bovine).